Consider the following 436-residue polypeptide: GTPase Der (436 aa).

EngA-type G domains follow at residues 4–167 (PIVA…GEEE) and 176–351 (IRLS…ENHK). GTP-binding positions include 10-17 (GRPNVGKS), 57-61 (DTGGI), 119-122 (NKVD), 182-189 (GRPNVGKS), 229-233 (DTAGM), and 294-297 (NKWD). A KH-like domain is found at 352–436 (KRVQSSTLNE…PIHIIARKRN (85 aa)).

This sequence belongs to the TRAFAC class TrmE-Era-EngA-EngB-Septin-like GTPase superfamily. EngA (Der) GTPase family. As to quaternary structure, associates with the 50S ribosomal subunit.

GTPase that plays an essential role in the late steps of ribosome biogenesis. The protein is GTPase Der of Staphylococcus aureus (strain USA300).